Reading from the N-terminus, the 254-residue chain is Isoprenyl transferase (254 aa).

Residue D34 is part of the active site. D34 contributes to the Mg(2+) binding site. Residues 35–38 (GNGR), W39, R47, H51, and 79–81 (STE) contribute to the substrate site. N82 functions as the Proton acceptor in the catalytic mechanism. Substrate-binding positions include W83, R85, R202, and 208 to 210 (RIS). E221 provides a ligand contact to Mg(2+).

Belongs to the UPP synthase family. In terms of assembly, homodimer. The cofactor is Mg(2+).

Functionally, catalyzes the condensation of isopentenyl diphosphate (IPP) with allylic pyrophosphates generating different type of terpenoids. This chain is Isoprenyl transferase, found in Staphylococcus saprophyticus subsp. saprophyticus (strain ATCC 15305 / DSM 20229 / NCIMB 8711 / NCTC 7292 / S-41).